A 585-amino-acid chain; its full sequence is CTP synthase (585 aa).

The interval 1–281 (MPALRKHPHT…DAYVVRRLNL (281 aa)) is amidoligase domain. S23 is a CTP binding site. S23 serves as a coordination point for UTP. Residues 24-29 (SLGKGL) and D81 each bind ATP. Residues D81 and E155 each contribute to the Mg(2+) site. CTP is bound by residues 162–164 (DIE), 202–207 (KTKPTQ), and K238. Residues 202–207 (KTKPTQ) and K238 contribute to the UTP site. The Glutamine amidotransferase type-1 domain occupies 306–554 (RIALVGKYID…VGAAVEYNNG (249 aa)). L-glutamine is bound at residue G369. Residue C396 is the Nucleophile; for glutamine hydrolysis of the active site. L-glutamine is bound by residues 397-400 (LGLQ), E419, and R480. Active-site residues include H527 and E529. The tract at residues 564–585 (IPTADHQSNGAEHALEDAPARG) is disordered. Basic and acidic residues predominate over residues 576-585 (HALEDAPARG).

It belongs to the CTP synthase family. Homotetramer.

The enzyme catalyses UTP + L-glutamine + ATP + H2O = CTP + L-glutamate + ADP + phosphate + 2 H(+). It catalyses the reaction L-glutamine + H2O = L-glutamate + NH4(+). It carries out the reaction UTP + NH4(+) + ATP = CTP + ADP + phosphate + 2 H(+). The protein operates within pyrimidine metabolism; CTP biosynthesis via de novo pathway; CTP from UDP: step 2/2. With respect to regulation, allosterically activated by GTP, when glutamine is the substrate; GTP has no effect on the reaction when ammonia is the substrate. The allosteric effector GTP functions by stabilizing the protein conformation that binds the tetrahedral intermediate(s) formed during glutamine hydrolysis. Inhibited by the product CTP, via allosteric rather than competitive inhibition. Catalyzes the ATP-dependent amination of UTP to CTP with either L-glutamine or ammonia as the source of nitrogen. Regulates intracellular CTP levels through interactions with the four ribonucleotide triphosphates. This Mycolicibacterium gilvum (strain PYR-GCK) (Mycobacterium gilvum (strain PYR-GCK)) protein is CTP synthase.